The chain runs to 649 residues: Acetyl-coenzyme A synthetase (649 aa).

Residues 191–194, threonine 311, and asparagine 335 each bind CoA; that span reads RGGR. Residues 387–389, 411–416, aspartate 500, and arginine 515 each bind ATP; these read GEP and DTWWQT. Serine 523 is a binding site for CoA. An ATP-binding site is contributed by arginine 526. Mg(2+) is bound by residues valine 537, phenylalanine 539, and isoleucine 542. Residue arginine 584 coordinates CoA. Lysine 609 carries the post-translational modification N6-acetyllysine.

The protein belongs to the ATP-dependent AMP-binding enzyme family. The cofactor is Mg(2+). Acetylated. Deacetylation by the SIR2-homolog deacetylase activates the enzyme.

It catalyses the reaction acetate + ATP + CoA = acetyl-CoA + AMP + diphosphate. In terms of biological role, catalyzes the conversion of acetate into acetyl-CoA (AcCoA), an essential intermediate at the junction of anabolic and catabolic pathways. AcsA undergoes a two-step reaction. In the first half reaction, AcsA combines acetate with ATP to form acetyl-adenylate (AcAMP) intermediate. In the second half reaction, it can then transfer the acetyl group from AcAMP to the sulfhydryl group of CoA, forming the product AcCoA. The protein is Acetyl-coenzyme A synthetase of Vibrio cholerae serotype O1 (strain ATCC 39315 / El Tor Inaba N16961).